A 302-amino-acid chain; its full sequence is Sulfate adenylyltransferase subunit 2 (302 aa).

A disordered region spans residues Glu279–Phe302. A compositionally biased stretch (basic and acidic residues) spans Arg280–Phe302.

Belongs to the PAPS reductase family. CysD subfamily. In terms of assembly, heterodimer composed of CysD, the smaller subunit, and CysN.

The enzyme catalyses sulfate + ATP + H(+) = adenosine 5'-phosphosulfate + diphosphate. Its pathway is sulfur metabolism; hydrogen sulfide biosynthesis; sulfite from sulfate: step 1/3. In terms of biological role, with CysN forms the ATP sulfurylase (ATPS) that catalyzes the adenylation of sulfate producing adenosine 5'-phosphosulfate (APS) and diphosphate, the first enzymatic step in sulfur assimilation pathway. APS synthesis involves the formation of a high-energy phosphoric-sulfuric acid anhydride bond driven by GTP hydrolysis by CysN coupled to ATP hydrolysis by CysD. This Photobacterium profundum (strain SS9) protein is Sulfate adenylyltransferase subunit 2.